Here is a 610-residue protein sequence, read N- to C-terminus: Probable galacturonosyltransferase 5 (610 aa).

Residues 1-6 (MNQVRR) are Cytoplasmic-facing. A helical; Signal-anchor for type II membrane protein transmembrane segment spans residues 7 to 27 (WQRILILSLLLLSVLAPIVFV). The Lumenal segment spans residues 28 to 610 (SNRLKSITSV…PHLQRCNIHD (583 aa)). Residues 86-101 (LSNSSDKSNDTVQSNE) are compositionally biased toward polar residues. The disordered stretch occupies residues 86–170 (LSNSSDKSND…KNTRVQLERA (85 aa)). Asn88 and Asn94 each carry an N-linked (GlcNAc...) asparagine glycan. Residues 110–123 (EVDKGNNHKPKEEQ) show a composition bias toward basic and acidic residues. Residues 124–135 (AVSQKTTVSSNA) show a composition bias toward polar residues. A compositionally biased stretch (basic and acidic residues) spans 139–170 (ISARDIQLNHKTEFRPPSSKSEKNTRVQLERA). N-linked (GlcNAc...) asparagine glycans are attached at residues Asn196, Asn338, Asn401, and Asn475.

The protein belongs to the glycosyltransferase 8 family. As to expression, expressed in roots, inflorescences, siliques, leaves and stems.

It is found in the golgi apparatus membrane. Its pathway is glycan metabolism; pectin biosynthesis. Its function is as follows. May be involved in pectin and/or xylans biosynthesis in cell walls. This is Probable galacturonosyltransferase 5 (GAUT5) from Arabidopsis thaliana (Mouse-ear cress).